A 244-amino-acid polypeptide reads, in one-letter code: Cobalt transport protein CbiM (244 aa).

Residues 1–20 (MRKITFIAALLSLLPRYALA) form the signal peptide. Transmembrane regions (helical) follow at residues 31 to 51 (KWCLLWYSIYIPFLMAGLIYI), 63 to 83 (ILLGFAGAFVFALSALKLPSV), 95 to 115 (LGAILLGPLPMAVIGGIVLLF), 117 to 137 (ALLLAHGGITTLGANAFSMAV), 161 to 181 (VFLGAASGDLMTYIITSLQLA), and 201 to 221 (IFAVTQLPLAIGEGILTVIVL).

The protein belongs to the CbiM family. Forms an energy-coupling factor (ECF) transporter complex composed of an ATP-binding protein (A component, CbiO), a transmembrane protein (T component, CbiQ) and 2 possible substrate-capture proteins (S components, CbiM and CbiN) of unknown stoichimetry.

Its subcellular location is the cell membrane. It participates in cofactor biosynthesis; adenosylcobalamin biosynthesis. In terms of biological role, part of the energy-coupling factor (ECF) transporter complex CbiMNOQ involved in cobalt import. This is Cobalt transport protein CbiM from Thermosediminibacter oceani (strain ATCC BAA-1034 / DSM 16646 / JW/IW-1228P).